Here is a 367-residue protein sequence, read N- to C-terminus: Methylthioribose-1-phosphate isomerase (367 aa).

Asp-250 serves as the catalytic Proton donor.

It belongs to the eIF-2B alpha/beta/delta subunits family. MtnA subfamily.

It localises to the cytoplasm. The protein resides in the nucleus. The enzyme catalyses 5-(methylsulfanyl)-alpha-D-ribose 1-phosphate = 5-(methylsulfanyl)-D-ribulose 1-phosphate. Its pathway is amino-acid biosynthesis; L-methionine biosynthesis via salvage pathway; L-methionine from S-methyl-5-thio-alpha-D-ribose 1-phosphate: step 1/6. In terms of biological role, catalyzes the interconversion of methylthioribose-1-phosphate (MTR-1-P) into methylthioribulose-1-phosphate (MTRu-1-P). This is Methylthioribose-1-phosphate isomerase (IDI2) from Zea mays (Maize).